Consider the following 87-residue polypeptide: Diazepam-binding inhibitor-like 5 (87 aa).

The ACB domain maps to 2-87 (SQVEFEMACA…VEELKKNETC (86 aa)). Residues 29–33 (YSFYK), Lys-55, and Tyr-74 each bind an acyl-CoA.

This sequence belongs to the ACBP family. Testis.

The protein resides in the cytoplasm. May be involved in the energy metabolism of the mature sperm. The polypeptide is Diazepam-binding inhibitor-like 5 (Dbil5) (Rattus norvegicus (Rat)).